Here is a 362-residue protein sequence, read N- to C-terminus: METTVKKQKKNLETKKPSIYSLQLHEMQDWLKEQGEPKFRAGQIFDWLYKKRVKNYEDMSNLAKGLRDKLSNSFDITTLNTLVKQTSSDGTIKFLFQLYDGYSIETVLMRHEYGNSICVTTQVGCRIGCTFCASTLGGLKRNLEAGEIVAQVVEVQRALDETEERVSSLVVMGIGEPFDNYDNLMSFLRIVNHEKGIHIGARHMTVSTSGIVPKIYKFAEEDMQINFAISLHAANTEIRSKLMPINRAYKLPDLMEAVKYYVNRTGRRITFEYGLFGGENDQVEHAEELAALLKGVKCHVNLIPVNYVPERDYVRTPREQIFLFEKTLKDRGVNVTIRREQGHDIDAACGQLRAKERKEETR.

Glu105 acts as the Proton acceptor in catalysis. In terms of domain architecture, Radical SAM core spans 111–344 (HEYGNSICVT…VTIRREQGHD (234 aa)). Cysteines 118 and 349 form a disulfide. Positions 125, 129, and 132 each coordinate [4Fe-4S] cluster. S-adenosyl-L-methionine is bound by residues 175–176 (GE), Ser207, 230–232 (SLH), and Asn306. Catalysis depends on Cys349, which acts as the S-methylcysteine intermediate.

The protein belongs to the radical SAM superfamily. RlmN family. It depends on [4Fe-4S] cluster as a cofactor.

Its subcellular location is the cytoplasm. The enzyme catalyses adenosine(2503) in 23S rRNA + 2 reduced [2Fe-2S]-[ferredoxin] + 2 S-adenosyl-L-methionine = 2-methyladenosine(2503) in 23S rRNA + 5'-deoxyadenosine + L-methionine + 2 oxidized [2Fe-2S]-[ferredoxin] + S-adenosyl-L-homocysteine. It catalyses the reaction adenosine(37) in tRNA + 2 reduced [2Fe-2S]-[ferredoxin] + 2 S-adenosyl-L-methionine = 2-methyladenosine(37) in tRNA + 5'-deoxyadenosine + L-methionine + 2 oxidized [2Fe-2S]-[ferredoxin] + S-adenosyl-L-homocysteine. In terms of biological role, specifically methylates position 2 of adenine 2503 in 23S rRNA and position 2 of adenine 37 in tRNAs. This chain is Probable dual-specificity RNA methyltransferase RlmN, found in Bacillus mycoides (strain KBAB4) (Bacillus weihenstephanensis).